Here is a 103-residue protein sequence, read N- to C-terminus: MINPLLRPLLTEKSTGLTEKKGQYVFVVKPDADKTDIKKAVEKKFGVEVKSIRTINCLGKSRAQNTRKGRVTGKKSDWKKAIITLEKGQSIDYYSNTAQKSEG.

Belongs to the universal ribosomal protein uL23 family. In terms of assembly, part of the 50S ribosomal subunit. Contacts protein L29, and trigger factor when it is bound to the ribosome.

Its function is as follows. One of the early assembly proteins it binds 23S rRNA. One of the proteins that surrounds the polypeptide exit tunnel on the outside of the ribosome. Forms the main docking site for trigger factor binding to the ribosome. The chain is Large ribosomal subunit protein uL23 from Pelodictyon phaeoclathratiforme (strain DSM 5477 / BU-1).